The primary structure comprises 511 residues: Activin receptor type-2B (511 aa).

A signal peptide spans 1–20 (MGASVALTFLLLLATFRAGS). At 21–136 (GHDEVETREC…KPQPSASVLN (116 aa)) the chain is on the extracellular side. An intrachain disulfide couples Cys-30 to Cys-61. 2 N-linked (GlcNAc...) asparagine glycosylation sites follow: Asn-43 and Asn-67. 3 cysteine pairs are disulfide-bonded: Cys-86/Cys-105, Cys-92/Cys-104, and Cys-106/Cys-111. Residues 137-157 (ILIYSLLPIVGLSMAILLAFW) form a helical membrane-spanning segment. Residues 158 to 511 (MYRHRKPSYG…VDLPPKESSI (354 aa)) lie on the Cytoplasmic side of the membrane. Positions 189-477 (LQLLDIKARG…LSAGCVEERI (289 aa)) constitute a Protein kinase domain. Residues 195 to 203 (KARGRFGCV) and Lys-216 each bind ATP. Catalysis depends on Asp-320, which acts as the Proton acceptor.

This sequence belongs to the protein kinase superfamily. TKL Ser/Thr protein kinase family. TGFB receptor subfamily.

It localises to the membrane. It carries out the reaction L-threonyl-[receptor-protein] + ATP = O-phospho-L-threonyl-[receptor-protein] + ADP + H(+). The enzyme catalyses L-seryl-[receptor-protein] + ATP = O-phospho-L-seryl-[receptor-protein] + ADP + H(+). In terms of biological role, receptor for activin A, activin B and inhibin A. Involved in transmembrane signaling. The chain is Activin receptor type-2B (acvr2b) from Xenopus laevis (African clawed frog).